The sequence spans 483 residues: Inositol-pentakisphosphate 2-kinase (483 aa).

Residues 140-144 (EIKPK) carry the EXKPK motif motif. Residues 279–298 (SNRSGEPRKMHLSESKPHCE) are disordered. Residues 281–297 (RSGEPRKMHLSESKPHC) show a composition bias toward basic and acidic residues.

The protein belongs to the IPK1 type 2 family. Expressed both maternally and zygotically. Expressed in cleavage-stage embryos. Ubiquitously distributed throughout blastula stages of embryogenesis. At the onset of gastrulation, it is enriched in cells around the blastoderm margin. At shield stage, expression is detected in the deep involuted cells that contribute to mesendoderm. During mid and late gastrula stages, it is strongly expressed in axial mesendoderm. However, it is not present in the nascent tailbud at yolk plug closure (YPC) stage. Expression in axial mesendoderm is reduced at the 2 somite stage (SS). At 6 SS, it is expressed in cells surrounding Kupffer's vesicle, but apparently not within. By 10 SS, it is no longer detected as a specific signal above background.

The protein resides in the cytoplasm. The protein localises to the nucleus. The enzyme catalyses 1D-myo-inositol 1,3,4,5,6-pentakisphosphate + ATP = 1D-myo-inositol hexakisphosphate + ADP + H(+). In terms of biological role, phosphorylates Ins(1,3,4,5,6)P5 at position 2 to form Ins(1,2,3,4,5,6)P6 (InsP6 or phytate). InsP6 is involved in many processes such as mRNA export, non-homologous end-joining, endocytosis and ion channel regulation. InsP6 also acts as a key regulator of left-right asymmetry in embryo, probably by regulating asymmetric Ca(2+) during left-right specification. This chain is Inositol-pentakisphosphate 2-kinase (ippk), found in Danio rerio (Zebrafish).